The following is a 290-amino-acid chain: MKFVIITGLSGAGKSQAIKYMEDFGYYCVDNLPPTLLTKFAELCYQSQGPMAKVALVIDIRGGMFFEDLFSSLERMTEAGYQYEILFLDASDKALIKRFKETRRSHPLSVDGSIPEGIALEREKLKELKQKAKHIIDTTNLRSAQLKEELNNIYVEGNQSNNLIISIVSFGFKHGIPLDADLVFDVRFLPNPFYIEDLKELTGNDKKVRDYVMNAPISVEFSNKLNDMISFLIPQYIEEGKNQLVIAIGCTGGMHRSVTIAHVLYNYLKERGYRVLMNHRDSNLSIGRKG.

8–15 (GLSGAGKS) contacts ATP. Residue 59 to 62 (DIRG) participates in GTP binding.

The protein belongs to the RapZ-like family.

Functionally, displays ATPase and GTPase activities. This chain is Nucleotide-binding protein Clos_0574, found in Alkaliphilus oremlandii (strain OhILAs) (Clostridium oremlandii (strain OhILAs)).